Consider the following 442-residue polypeptide: UDP-N-acetylmuramate--L-alanine ligase (442 aa).

ATP is bound at residue 109–115 (GAHGKTS).

It belongs to the MurCDEF family.

It is found in the cytoplasm. The enzyme catalyses UDP-N-acetyl-alpha-D-muramate + L-alanine + ATP = UDP-N-acetyl-alpha-D-muramoyl-L-alanine + ADP + phosphate + H(+). Its pathway is cell wall biogenesis; peptidoglycan biosynthesis. In terms of biological role, cell wall formation. This is UDP-N-acetylmuramate--L-alanine ligase from Streptococcus pyogenes serotype M2 (strain MGAS10270).